Reading from the N-terminus, the 153-residue chain is Endoribonuclease YbeY (153 aa).

Zn(2+)-binding residues include H118, H122, and H128.

Belongs to the endoribonuclease YbeY family. The cofactor is Zn(2+).

It localises to the cytoplasm. Its function is as follows. Single strand-specific metallo-endoribonuclease involved in late-stage 70S ribosome quality control and in maturation of the 3' terminus of the 16S rRNA. In Staphylococcus carnosus (strain TM300), this protein is Endoribonuclease YbeY.